The chain runs to 57 residues: Potassium channel toxin alpha-KTx 8.2 (57 aa).

Residues 1–28 form the signal peptide; the sequence is MSRLYAIILIALVFNVVMTITPDMKVEA. 3 disulfides stabilise this stretch: Cys-31-Cys-47, Cys-34-Cys-52, and Cys-38-Cys-54.

The protein belongs to the short scorpion toxin superfamily. Potassium channel inhibitor family. Alpha-KTx 08 subfamily. As to expression, expressed by the venom gland.

The protein resides in the secreted. In terms of biological role, this toxin inhibits rKv1.1/KCNA1 (100% inhibition at 3 uM), Kv1.3/KCNA3 (human, mouse and rat) (IC(50)=269-467 nM), shaker IR (60% at 3 uM) and activates the mouse capsaicin receptor TRPV1 (EC(50)=132 uM, at 20 degrees Celsius), a non-selective cation channel expressed by sensory neurons of the pain pathway. In vivo, intraplantar injection of this toxin in WT mice hind paw shows significant acute pain, whereas no pain is observed when the toxin is injected into TRPV1 KO mice. In addition, subcutaneous injection into mice (185 mg) produces an excitation of the animal, but no lethality, whereas injection into cockroaches does not provoke lethality as well. The sequence is that of Potassium channel toxin alpha-KTx 8.2 from Olivierus martensii (Manchurian scorpion).